We begin with the raw amino-acid sequence, 246 residues long: Deoxycytidylate 5-hydroxymethyltransferase (246 aa).

Residue Cys-148 is part of the active site.

Belongs to the thymidylate synthase family.

The catalysed reaction is dCMP + (6R)-5,10-methylene-5,6,7,8-tetrahydrofolate + H2O = 5-hydroxymethyl-dCMP + (6S)-5,6,7,8-tetrahydrofolate. This Enterobacteria phage T4 (Bacteriophage T4) protein is Deoxycytidylate 5-hydroxymethyltransferase (42).